Consider the following 398-residue polypeptide: 1-deoxy-D-xylulose 5-phosphate reductoisomerase (398 aa).

Positions 10, 11, 12, 13, 37, 38, and 124 each coordinate NADPH. Residue K125 coordinates 1-deoxy-D-xylulose 5-phosphate. E126 is a binding site for NADPH. Residue D150 coordinates Mn(2+). 1-deoxy-D-xylulose 5-phosphate is bound by residues S151, E152, S186, and H209. Mn(2+) is bound at residue E152. Residue G215 coordinates NADPH. 1-deoxy-D-xylulose 5-phosphate contacts are provided by S222, N227, K228, and E231. E231 contacts Mn(2+).

It belongs to the DXR family. In terms of assembly, homodimer. The cofactor is Mg(2+). It depends on Mn(2+) as a cofactor.

The catalysed reaction is 2-C-methyl-D-erythritol 4-phosphate + NADP(+) = 1-deoxy-D-xylulose 5-phosphate + NADPH + H(+). Its pathway is isoprenoid biosynthesis; isopentenyl diphosphate biosynthesis via DXP pathway; isopentenyl diphosphate from 1-deoxy-D-xylulose 5-phosphate: step 1/6. Catalyzes the NADPH-dependent rearrangement and reduction of 1-deoxy-D-xylulose-5-phosphate (DXP) to 2-C-methyl-D-erythritol 4-phosphate (MEP). In Buchnera aphidicola subsp. Acyrthosiphon pisum (strain 5A), this protein is 1-deoxy-D-xylulose 5-phosphate reductoisomerase.